We begin with the raw amino-acid sequence, 342 residues long: S-adenosylmethionine:tRNA ribosyltransferase-isomerase (342 aa).

The protein belongs to the QueA family. Monomer.

The protein localises to the cytoplasm. It carries out the reaction 7-aminomethyl-7-carbaguanosine(34) in tRNA + S-adenosyl-L-methionine = epoxyqueuosine(34) in tRNA + adenine + L-methionine + 2 H(+). It functions in the pathway tRNA modification; tRNA-queuosine biosynthesis. Transfers and isomerizes the ribose moiety from AdoMet to the 7-aminomethyl group of 7-deazaguanine (preQ1-tRNA) to give epoxyqueuosine (oQ-tRNA). This Streptococcus sanguinis (strain SK36) protein is S-adenosylmethionine:tRNA ribosyltransferase-isomerase.